Here is a 111-residue protein sequence, read N- to C-terminus: UPF0145 protein BMA10229_A0446 (111 aa).

It belongs to the UPF0145 family.

This chain is UPF0145 protein BMA10229_A0446, found in Burkholderia mallei (strain NCTC 10229).